The primary structure comprises 138 residues: Small ribosomal subunit protein uS11 (138 aa).

Residues 1-12 (MPPAKKAAAAPK) show a composition bias toward low complexity. Residues 1-27 (MPPAKKAAAAPKKGQKTRRREKKNVPH) are disordered. Basic residues predominate over residues 13–22 (KGQKTRRREK).

The protein belongs to the universal ribosomal protein uS11 family. As to quaternary structure, part of the 30S ribosomal subunit. Interacts with proteins S7 and S18. Binds to IF-3.

Located on the platform of the 30S subunit, it bridges several disparate RNA helices of the 16S rRNA. Forms part of the Shine-Dalgarno cleft in the 70S ribosome. This is Small ribosomal subunit protein uS11 from Mycolicibacterium paratuberculosis (strain ATCC BAA-968 / K-10) (Mycobacterium paratuberculosis).